The following is a 337-amino-acid chain: Protein-methionine-sulfoxide reductase catalytic subunit MsrP (337 aa).

The tat-type signal signal peptide spans 1 to 48 (MLIKIPSRSDCSESEVTSETLYLSRRRLLGASFAGLALASGLPRLGFA). Mo-molybdopterin is bound by residues asparagine 94, 97 to 98 (YE), cysteine 152, threonine 187, asparagine 237, arginine 242, and 253 to 255 (SIK).

It belongs to the MsrP family. Heterodimer of a catalytic subunit (MsrP) and a heme-binding subunit (MsrQ). It depends on Mo-molybdopterin as a cofactor. Post-translationally, predicted to be exported by the Tat system. The position of the signal peptide cleavage has not been experimentally proven.

The protein localises to the periplasm. It catalyses the reaction L-methionyl-[protein] + a quinone + H2O = L-methionyl-(S)-S-oxide-[protein] + a quinol. The enzyme catalyses L-methionyl-[protein] + a quinone + H2O = L-methionyl-(R)-S-oxide-[protein] + a quinol. In terms of biological role, part of the MsrPQ system that repairs oxidized periplasmic proteins containing methionine sulfoxide residues (Met-O), using respiratory chain electrons. Thus protects these proteins from oxidative-stress damage caused by reactive species of oxygen and chlorine generated by the host defense mechanisms. MsrPQ is essential for the maintenance of envelope integrity under bleach stress, rescuing a wide series of structurally unrelated periplasmic proteins from methionine oxidation. The catalytic subunit MsrP is non-stereospecific, being able to reduce both (R-) and (S-) diastereoisomers of methionine sulfoxide. This is Protein-methionine-sulfoxide reductase catalytic subunit MsrP from Pseudomonas aeruginosa (strain ATCC 15692 / DSM 22644 / CIP 104116 / JCM 14847 / LMG 12228 / 1C / PRS 101 / PAO1).